A 430-amino-acid polypeptide reads, in one-letter code: Tyrosine--tRNA ligase (430 aa).

Tyr-32 lines the L-tyrosine pocket. The 'HIGH' region signature appears at 37–46 (PTADSLHIGH). Positions 172 and 176 each coordinate L-tyrosine. The 'KMSKS' region signature appears at 232–236 (KFGKT). Lys-235 is an ATP binding site. An S4 RNA-binding domain is found at 362-430 (ISLVDLLADA…KKSYYLIIVE (69 aa)).

The protein belongs to the class-I aminoacyl-tRNA synthetase family. TyrS type 1 subfamily. Homodimer.

The protein resides in the cytoplasm. The enzyme catalyses tRNA(Tyr) + L-tyrosine + ATP = L-tyrosyl-tRNA(Tyr) + AMP + diphosphate + H(+). Catalyzes the attachment of tyrosine to tRNA(Tyr) in a two-step reaction: tyrosine is first activated by ATP to form Tyr-AMP and then transferred to the acceptor end of tRNA(Tyr). This Porphyromonas gingivalis (strain ATCC 33277 / DSM 20709 / CIP 103683 / JCM 12257 / NCTC 11834 / 2561) protein is Tyrosine--tRNA ligase.